The chain runs to 204 residues: B9 domain-containing protein 1 (204 aa).

The C2 B9-type domain occupies 9-127 (FLLMITGQVE…TIPMFVPEST (119 aa)).

The protein belongs to the B9D family. As to quaternary structure, part of the tectonic-like complex (also named B9 complex).

Its subcellular location is the cytoplasm. It localises to the cytoskeleton. It is found in the cilium basal body. In terms of biological role, component of the tectonic-like complex, a complex localized at the transition zone of primary cilia and acting as a barrier that prevents diffusion of transmembrane proteins between the cilia and plasma membranes. Required for ciliogenesis and sonic hedgehog/SHH signaling. The chain is B9 domain-containing protein 1 (B9d1) from Mus musculus (Mouse).